The following is a 214-amino-acid chain: MLRLLLRHHFHCLLLCAVWATPCLASPWSTLTANQNPSPPWSKLTYSKPHDAATFYCPFLYPSPPRSPLQFSGFQQVSTGPECRNETLYLLYNREGQTLVERSSTWVKKVIWYLSGRNQTILQRMPQTASKPSDGNVQISVEDAKIFGAHMVPKQTKLLRFVVNDGTRYQMCVMKLESWAHVFRDYSVSFQVRLTFTEANNQTYTFCTHPNLIV.

This sequence belongs to the HHV-5 UL130 protein family. In terms of assembly, forms the envelope pentamer complex (PC) composed of gH, gL, UL128, UL130, and UL131A. The pentamer interacts with host NRP2.

It localises to the virion membrane. In terms of biological role, plays a role in viral entry into host cells. Forms a pentameric complex at the surface of the viral envelope together with gH, gL, UL130 and UL131. This complex is required for entry in epithelial, endothelial and myeloid host cells. Mechanistically, engages host receptor(s) including neurophilin 2/NRP2 to mediate infection. This is an uncharacterized protein from Human cytomegalovirus (strain AD169) (HHV-5).